The primary structure comprises 556 residues: 2-succinyl-5-enolpyruvyl-6-hydroxy-3-cyclohexene-1-carboxylate synthase (556 aa).

The protein belongs to the TPP enzyme family. MenD subfamily. In terms of assembly, homodimer. It depends on Mg(2+) as a cofactor. The cofactor is Mn(2+). Requires thiamine diphosphate as cofactor.

It catalyses the reaction isochorismate + 2-oxoglutarate + H(+) = 5-enolpyruvoyl-6-hydroxy-2-succinyl-cyclohex-3-ene-1-carboxylate + CO2. It participates in quinol/quinone metabolism; 1,4-dihydroxy-2-naphthoate biosynthesis; 1,4-dihydroxy-2-naphthoate from chorismate: step 2/7. It functions in the pathway quinol/quinone metabolism; menaquinone biosynthesis. In terms of biological role, catalyzes the thiamine diphosphate-dependent decarboxylation of 2-oxoglutarate and the subsequent addition of the resulting succinic semialdehyde-thiamine pyrophosphate anion to isochorismate to yield 2-succinyl-5-enolpyruvyl-6-hydroxy-3-cyclohexene-1-carboxylate (SEPHCHC). The polypeptide is 2-succinyl-5-enolpyruvyl-6-hydroxy-3-cyclohexene-1-carboxylate synthase (Klebsiella pneumoniae subsp. pneumoniae (strain ATCC 700721 / MGH 78578)).